We begin with the raw amino-acid sequence, 484 residues long: Oxysterol-binding protein-related protein 2 (484 aa).

Phosphoserine is present on residues Ser19 and Ser20. A disordered region spans residues 35-61; it reads DLDTSKSTRSGKNGEKPQQENGIQKHR. Residues Lys90 and 178–179 each bind a 1,2-diacyl-sn-glycero-3-phospho-(1D-myo-inositol-4,5-bisphosphate); that span reads HH. Basic and acidic residues-rich tracts occupy residues 319–340 and 424–450; these read KQEK…EKAN and SQEK…EWRT. Disordered regions lie at residues 319-348 and 423-454; these read KQEK…GDVA and ASQE…RWFS. 431–435 lines the a 1,2-diacyl-sn-glycero-3-phospho-(1D-myo-inositol-4,5-bisphosphate) pocket; the sequence is EEKQR.

This sequence belongs to the OSBP family. As to quaternary structure, monomer. Homotetramer; phosphatidylinositol-4,5-bisphosphate binding promotes formation of stable tetramers. Interacts with DIAPH1. As to expression, detected in cochlea, in inner and outer hair cells in the organ of Corti (at protein level).

It localises to the cytoplasm. It is found in the cytosol. The protein localises to the lipid droplet. The protein resides in the cell membrane. Its function is as follows. Intracellular transport protein that binds sterols and phospholipids and mediates lipid transport between intracellular compartments. Increases plasma membrane cholesterol levels and decreases phosphatidylinositol-4,5-bisphosphate levels in the cell membrane. Binds phosphoinositides, such as phosphatidylinositol-4,5-bisphosphate. Exhibits strong binding to phosphatidic acid and weak binding to phosphatidylinositol 3-phosphate. Binds cholesterol, dehydroergosterol, 22(R)-hydroxycholesterol and 25-hydroxycholesterol (in vitro). The polypeptide is Oxysterol-binding protein-related protein 2 (Osbpl2) (Mus musculus (Mouse)).